A 701-amino-acid polypeptide reads, in one-letter code: Transcription factor PDR8 (701 aa).

The disordered stretch occupies residues 1-22 (MDGSHFPMKSTTGEPVSSGKKG). Positions 31-59 (CAFCRKRKLKCSQARPMCQQCVIRKLPQC) form a DNA-binding region, zn(2)-C6 fungal-type.

Its subcellular location is the cytoplasm. The protein resides in the nucleus. Up-regulates the transcription of the genes for ATP-binding cassette (ABC) transporters YOR1 and PDR15, for major facilitator superfamily transporter AZR1, for pleiotropic drug resistance SNG1, for alpha-glucosidase YJL216C and for YLL056C. The chain is Transcription factor PDR8 (PDR8) from Saccharomyces cerevisiae (strain ATCC 204508 / S288c) (Baker's yeast).